A 737-amino-acid chain; its full sequence is LIMR family protein R05D3.2 (737 aa).

Over residues 280–293 the composition is skewed to acidic residues; sequence ADIEEENSEQSEDV. The tract at residues 280–416 is disordered; it reads ADIEEENSEQ…PKKPKNPNFD (137 aa). Residues 303–318 show a composition bias toward basic and acidic residues; sequence ETIHQVDRSDTPHLED.

This sequence belongs to the LIMR family.

The protein is LIMR family protein R05D3.2 of Caenorhabditis elegans.